The following is a 205-amino-acid chain: SREBP regulating gene protein (205 aa).

Over 1 to 16 (MLNLAALLWRRLLRKR) the chain is Cytoplasmic. Residues 17–35 (WVLALVFGLSLVYFLSSTF) form a helical membrane-spanning segment. The Lumenal portion of the chain corresponds to 36–205 (KQEERAVRDR…GESPPELFPA (170 aa)). An N-linked (GlcNAc...) asparagine glycan is attached at asparagine 67.

This sequence belongs to the SPRING family. In terms of assembly, interacts with SCAP. Ubiquitously expressed with a slightly higher expression in the liver and kidney.

The protein resides in the golgi apparatus membrane. Its function is as follows. Positively regulates hepatic SREBP signaling pathway by modulating the proper localization of SCAP (SREBP cleavage-activating protein) to the endoplasmic reticulum, thereby controlling the level of functional SCAP. Plays a crucial role during embryogenesis. This chain is SREBP regulating gene protein (Spring1), found in Mus musculus (Mouse).